The primary structure comprises 316 residues: MST50-interacting protein 11 (316 aa).

WD repeat units follow at residues 13–53 (GHNG…TSYG), 61–100 (GHSH…TTRR), 103–142 (GHTN…KYTI), 146–187 (GHSE…LQTD), 190–229 (GHTG…HLYS), 231–269 (NAND…KVDE), and 281–316 (SREP…MSRA).

It belongs to the WD repeat G protein beta family. Ribosomal protein RACK1 subfamily. As to quaternary structure, interacts with MST50 and MCK1.

In terms of biological role, involved in regulating the cell wall integrity and MPS1 activation via its interaction with the MAPKKK MCK1. This chain is MST50-interacting protein 11, found in Pyricularia oryzae (strain 70-15 / ATCC MYA-4617 / FGSC 8958) (Rice blast fungus).